The sequence spans 373 residues: 3 beta-hydroxysteroid dehydrogenase/Delta 5--&gt;4-isomerase (373 aa).

Tyr-155 (proton acceptor) is an active-site residue. Lys-159 contacts NAD(+). Residues 288 to 308 (ISLEYWLAFLLEIVSFLLSPI) traverse the membrane as a helical segment.

The protein belongs to the 3-beta-HSD family.

Its subcellular location is the endoplasmic reticulum membrane. It localises to the mitochondrion membrane. The enzyme catalyses a 3beta-hydroxy-Delta(5)-steroid + NAD(+) = a 3-oxo-Delta(5)-steroid + NADH + H(+). It catalyses the reaction a 3-oxo-Delta(5)-steroid = a 3-oxo-Delta(4)-steroid. It functions in the pathway lipid metabolism; steroid biosynthesis. Functionally, 3-beta-HSD is a bifunctional enzyme, that catalyzes the oxidative conversion of Delta(5)-ene-3-beta-hydroxy steroid, and the oxidative conversion of ketosteroids. The 3-beta-HSD enzymatic system plays a crucial role in the biosynthesis of all classes of hormonal steroids. The protein is 3 beta-hydroxysteroid dehydrogenase/Delta 5--&gt;4-isomerase (HSD3B) of Canis lupus familiaris (Dog).